A 353-amino-acid polypeptide reads, in one-letter code: Guanine nucleotide-binding protein subunit alpha (353 aa).

G2 carries the N-myristoyl glycine lipid modification. The S-palmitoyl cysteine moiety is linked to residue C3. Positions 32–353 constitute a G-alpha domain; the sequence is NEIKMLLLGA…QENLRLCGLI (322 aa). Residues 35-48 form a G1 motif region; that stretch reads KMLLLGAGESGKST. GTP contacts are provided by E43, S44, G45, K46, S47, T48, D150, L175, T181, G203, N269, K270, D272, and A325. Mg(2+) is bound at residue S47. The interval 173 to 181 is G2 motif; that stretch reads DVLRSRVKT. T181 serves as a coordination point for Mg(2+). The interval 196–205 is G3 motif; it reads YRMFDVGGQR. Residues 265–272 form a G4 motif region; the sequence is ILFLNKID. The segment at 323-328 is G5 motif; it reads TCATDT.

This sequence belongs to the G-alpha family. G(q) subfamily. G proteins are composed of 3 units; alpha, beta and gamma. The alpha chain contains the guanine nucleotide binding site. The cofactor is Mg(2+).

Functionally, guanine nucleotide-binding proteins (G proteins) are involved as modulators or transducers in various transmembrane signaling systems. Involved in the mating pathway. This is Guanine nucleotide-binding protein subunit alpha (CGA1) from Cochliobolus heterostrophus (strain C4 / ATCC 48331 / race T) (Southern corn leaf blight fungus).